Consider the following 409-residue polypeptide: Ubiquitin-associated domain-containing protein 1 (409 aa).

Met-1 carries the post-translational modification N-acetylmethionine. Positions 14 to 98 constitute a Ubiquitin-like domain; that stretch reads LRLHICAADG…LLLIKKRAPS (85 aa). Residues 187–231 form the UBA 1 domain; it reads DEDERVDETALRQLTEMGFPESRASKALRLNHMSVPQAMEWLIEH. The interval 235 to 273 is disordered; the sequence is PAIDTPLPGHAAQAEASAAAATSSSSSEAAVGTSVEDEE. Residues 245–264 show a composition bias toward low complexity; sequence AAQAEASAAAATSSSSSEAA. The region spanning 292-332 is the UBA 2 domain; sequence RADARAVISLMEMGFDEKEVIDALRVNNNQQNAACEWLLGD. Residues 357 to 396 enclose the STI1 domain; the sequence is NPVVQLGLTNPKTLLAFEDMLENPLNSTQWMNDPETGPVM.

As to quaternary structure, component of the KPC complex composed of RNF123/KPC1 and UBAC1/KPC2. Interacts (via ubiquitin-like domain) with RNF123. Interacts (via ubiquitin-like and UBA domains) with the proteasome via its N-terminal domain.

The protein localises to the cytoplasm. The protein operates within protein modification; protein ubiquitination. Functionally, non-catalytic component of the KPC complex, a E3 ubiquitin-protein ligase complex that mediates polyubiquitination of target proteins, such as CDKN1B and NFKB1. The KPC complex catalyzes polyubiquitination and proteasome-mediated degradation of CDKN1B during G1 phase of the cell cycle. The KPC complex also acts as a key regulator of the NF-kappa-B signaling by promoting maturation of the NFKB1 component of NF-kappa-B by catalyzing ubiquitination of the NFKB1 p105 precursor. Within the KPC complex, UBAC1 acts as an adapter that promotes the transfer of target proteins that have been polyubiquitinated by RNF123/KPC1 to the 26S proteasome. This Rattus norvegicus (Rat) protein is Ubiquitin-associated domain-containing protein 1 (Ubac1).